The following is a 1512-amino-acid chain: Zinc finger protein 608 (1512 aa).

5 disordered regions span residues 1 to 23 (MSVNISTAGKGVDPNTVDTYDSG), 46 to 74 (QKFEMNNSTTTTSSSNSKDCGGPASSGAG), 89 to 237 (QASA…HLYG), 260 to 295 (VAAAGEVSKSAPDSGLMGNSMLVKKEEEEEESHRRI), and 417 to 545 (RFCE…FLDQ). Composition is skewed to low complexity over residues 51–74 (NNSTTTTSSSNSKDCGGPASSGAG) and 151–185 (SALGQSVSSGGSGNPNSNSTSTSTSAATAGAGSCG). The span at 201 to 218 (AKRDKDAGKSRKDKHDLL) shows a compositional bias: basic and acidic residues. Residues 220 to 230 (GHQNGSGSQAP) are compositionally biased toward polar residues. The span at 260–270 (VAAAGEVSKSA) shows a compositional bias: low complexity. Residues 278 to 304 (NSMLVKKEEEEEESHRRIKKLKTEKVD) are a coiled coil. Lys283 participates in a covalent cross-link: Glycyl lysine isopeptide (Lys-Gly) (interchain with G-Cter in SUMO2). Ser421 and Ser424 each carry phosphoserine. The span at 449–458 (ASFTESRGLQ) shows a compositional bias: polar residues. Thr481 carries the phosphothreonine modification. Position 493 is a phosphoserine (Ser493). Residues 526 to 535 (NSRSTPTTPQ) are compositionally biased toward polar residues. Residues 553–578 (IDCPHPNCNKKYKHINGLRYHQAHAH) form a C2H2-type zinc finger. Disordered stretches follow at residues 622 to 665 (LKAP…KKKG), 713 to 750 (DKEKGKKATNCKTDKNLSKLKSARPIAPAPAPTPPQLI), and 777 to 858 (QATP…KDHL). Ser627 carries the phosphoserine modification. Residues 713–729 (DKEKGKKATNCKTDKNL) show a composition bias toward basic and acidic residues. The segment covering 781 to 790 (KSPPLKPIQP) has biased composition (pro residues). A Phosphoserine modification is found at Ser782. Positions 818-858 (KLKDKEGKETGSPKMDAKLGKLEDSKGASKDLPGHFLKDHL) are enriched in basic and acidic residues. Lys880 participates in a covalent cross-link: Glycyl lysine isopeptide (Lys-Gly) (interchain with G-Cter in SUMO2). A Phosphoserine modification is found at Ser895. Residues 925-934 (NGAESSAAKT) show a composition bias toward polar residues. 2 disordered regions span residues 925-996 (NGAE…HSPY) and 1011-1066 (PGQV…HQSV). Positions 960–973 (SKASSPSDIISSKD) are enriched in low complexity. Residue Ser964 is modified to Phosphoserine. Positions 979–989 (HSSTTAQSSQL) are enriched in polar residues. The segment covering 1030–1054 (IKKESEEDAEKKDKAEQLDSKKVDH) has biased composition (basic and acidic residues). The span at 1055 to 1066 (NSASLQPQHQSV) shows a compositional bias: polar residues. Ser1098 carries the phosphoserine modification. Positions 1117 to 1192 (QKMAQTGRGD…SQLLSNHQQQ (76 aa)) are disordered. Lys1118 participates in a covalent cross-link: Glycyl lysine isopeptide (Lys-Gly) (interchain with G-Cter in SUMO2). Residues 1125–1145 (GDCERKSELPLKELGKEETKQ) are compositionally biased toward basic and acidic residues. Residues 1146–1157 (KNMPSATISKAP) show a composition bias toward polar residues. Residues Lys1176 and Lys1182 each participate in a glycyl lysine isopeptide (Lys-Gly) (interchain with G-Cter in SUMO2) cross-link. Residues 1183-1192 (SQLLSNHQQQ) are compositionally biased toward low complexity. Residues Lys1199, Lys1216, Lys1234, and Lys1250 each participate in a glycyl lysine isopeptide (Lys-Gly) (interchain with G-Cter in SUMO2) cross-link. Residues 1220–1335 (DSMKQTGVDP…RGTRVAVSSP (116 aa)) are disordered. Positions 1231 to 1241 (SRFKQDPDSRT) are enriched in basic and acidic residues. Basic and acidic residues-rich tracts occupy residues 1253 to 1276 (DQQKSEELDREKKLKEDSPRKTPN) and 1291 to 1327 (IKEEPKEAKHPDSQSMEESKLKNDDRKTPVNWKDSRG). Glycyl lysine isopeptide (Lys-Gly) (interchain with G-Cter in SUMO2) cross-links involve residues Lys1292, Lys1310, and Lys1414. The tract at residues 1423 to 1459 (ANQYRSKSPAPVEKATAEREREAERERDRHSPFGQRH) is disordered. Positions 1437–1453 (ATAEREREAERERDRHS) are enriched in basic and acidic residues.

In terms of biological role, transcription factor, which represses ZNF609 transcription. In Homo sapiens (Human), this protein is Zinc finger protein 608 (ZNF608).